Consider the following 83-residue polypeptide: UPF0298 protein SERP0712 (83 aa).

It belongs to the UPF0298 family.

It is found in the cytoplasm. The protein is UPF0298 protein SERP0712 of Staphylococcus epidermidis (strain ATCC 35984 / DSM 28319 / BCRC 17069 / CCUG 31568 / BM 3577 / RP62A).